The sequence spans 309 residues: MVKVYAPASIGNVSVGFDVLGAAVSPVNGELLGDCVTVEAAAEFSLTNTGRFVSKLPAEPRENIAWQCWERFCQEIGKTVPVAMTLEKNMPIGSGLGSSACSVVAGLMAMNEFCGKPLSDDRLLTLMGELEGRISGSIHYDNVAPCFLGGLQLMLEENNIISQPVPCFDEWLWVMAYPGIKVSTAEARAILPAQYRRQDCISHGRYLAGFIHACHTRQPQLAAKLMRDVIAEPYRTKLLPGFSEARQAALETGALACGISGSGPTLFAVCDKTDTAQRVAEWLKQHYLQNQEGFVHICRLDTAGARVLG.

91–101 (PIGSGLGSSAC) is a binding site for ATP.

It belongs to the GHMP kinase family. Homoserine kinase subfamily.

It localises to the cytoplasm. It carries out the reaction L-homoserine + ATP = O-phospho-L-homoserine + ADP + H(+). The protein operates within amino-acid biosynthesis; L-threonine biosynthesis; L-threonine from L-aspartate: step 4/5. Functionally, catalyzes the ATP-dependent phosphorylation of L-homoserine to L-homoserine phosphate. The polypeptide is Homoserine kinase (Cronobacter sakazakii (strain ATCC BAA-894) (Enterobacter sakazakii)).